The chain runs to 249 residues: Basic leucine zipper 23 (249 aa).

Residues 66 to 90 (KVSTDDTSESSGKKRPLGNREAVRK) form a disordered region. One can recognise a bZIP domain in the interval 74 to 121 (ESSGKKRPLGNREAVRKYREKKKAKAASLEDEVMRLKAVNNQLLKRLQ). Residues 78-98 (KKRPLGNREAVRKYREKKKAK) are basic motif. The interval 102-116 (LEDEVMRLKAVNNQL) is leucine-zipper.

It is found in the nucleus. Transcription factor involved in the response to zinc ion deficiency. Binds to the consensus sequence 5'-[AG]TGTCGACA[CT]-3' also called zinc deficiency response element (ZDRE). The ZDRE sequence is conserved in the plant kingdom and present in the promoters of genes that constitute the primary response to zinc deficiency, comprising additional ZIP metal transporter genes. Required for zinc accumulation in roots. Mediates the expression of the zinc transporter ZIP12 during growth in zinc-deficient conditions. ZIP12 transporter is involved in zinc uptake in roots. This is Basic leucine zipper 23 from Arabidopsis thaliana (Mouse-ear cress).